The sequence spans 589 residues: Serine/threonine-protein kinase STE7 homolog (589 aa).

Residues 1 to 18 (MTRTTRIDTQEATKHKDL) show a composition bias toward basic and acidic residues. Disordered stretches follow at residues 1–162 (MTRT…DPDN) and 185–232 (RQHY…PASS). The span at 24 to 33 (PLSLSSNPNP) shows a compositional bias: low complexity. The span at 57–69 (VKSTSGSLRSSDM) shows a compositional bias: polar residues. Over residues 92-121 (PTASSSATSTPTSNITGSSSASSIQFAQKS) the composition is skewed to low complexity. Polar residues-rich tracts occupy residues 127–136 (IVSQTLSRPS) and 144–162 (SGYSSLNVNQSNRNVDPDN). Residues 185-203 (RQHYQNSHHHLPTTNRKRQ) are compositionally biased toward basic residues. Positions 206-220 (ISSISPTKSSAASSP) are enriched in low complexity. The 317-residue stretch at 249-565 (LLTLKQLGSG…QLLEDKEHFF (317 aa)) folds into the Protein kinase domain. Residues 255–263 (LGSGNSGSV) and Lys-278 contribute to the ATP site. Asp-374 acts as the Proton acceptor in catalysis. The residue at position 402 (Ser-402) is a Phosphoserine. Thr-408 carries the post-translational modification Phosphothreonine. The disordered stretch occupies residues 473–499 (IAAERNGQNSPSRSRKNKQKGNGYNSY).

The protein belongs to the protein kinase superfamily. STE Ser/Thr protein kinase family. MAP kinase kinase subfamily.

It catalyses the reaction L-seryl-[protein] + ATP = O-phospho-L-seryl-[protein] + ADP + H(+). It carries out the reaction L-threonyl-[protein] + ATP = O-phospho-L-threonyl-[protein] + ADP + H(+). The enzyme catalyses L-tyrosyl-[protein] + ATP = O-phospho-L-tyrosyl-[protein] + ADP + H(+). The sequence is that of Serine/threonine-protein kinase STE7 homolog (HST7) from Candida albicans (strain WO-1) (Yeast).